A 637-amino-acid chain; its full sequence is Phosphomethylpyrimidine synthase (637 aa).

Residues Asn242, Met271, Tyr300, His336, 356–358 (SRG), 397–400 (DGLR), and Glu436 contribute to the substrate site. His440 is a binding site for Zn(2+). Substrate is bound at residue Tyr463. His504 contributes to the Zn(2+) binding site. Residues Cys584, Cys587, and Cys592 each coordinate [4Fe-4S] cluster.

Belongs to the ThiC family. Homodimer. It depends on [4Fe-4S] cluster as a cofactor.

The catalysed reaction is 5-amino-1-(5-phospho-beta-D-ribosyl)imidazole + S-adenosyl-L-methionine = 4-amino-2-methyl-5-(phosphooxymethyl)pyrimidine + CO + 5'-deoxyadenosine + formate + L-methionine + 3 H(+). Its pathway is cofactor biosynthesis; thiamine diphosphate biosynthesis. Catalyzes the synthesis of the hydroxymethylpyrimidine phosphate (HMP-P) moiety of thiamine from aminoimidazole ribotide (AIR) in a radical S-adenosyl-L-methionine (SAM)-dependent reaction. The protein is Phosphomethylpyrimidine synthase of Bordetella pertussis (strain Tohama I / ATCC BAA-589 / NCTC 13251).